The chain runs to 277 residues: Large ribosomal subunit protein uL2c (277 aa).

The disordered stretch occupies residues 228-254 (VDHPHGGGEGRCPVGHAQPRTPWGKPA).

It belongs to the universal ribosomal protein uL2 family. Part of the 50S ribosomal subunit.

Its subcellular location is the plastid. It is found in the chloroplast. In Ostreococcus tauri, this protein is Large ribosomal subunit protein uL2c (rpl2).